The primary structure comprises 435 residues: Protein deadpan (435 aa).

Residues 18 to 27 (GYSDSYGSNG) are compositionally biased toward low complexity. The disordered stretch occupies residues 18–48 (GYSDSYGSNGRMSNPNGLSKAELRKTNKPIM). The 58-residue stretch at 40-97 (LRKTNKPIMEKRRRARINHCLNELKSLILEAMKKDPARHTKLEKADILEMTVKHLQSV) folds into the bHLH domain. Residues 116–149 (FKTGFVECAEEVNRYVSQMDGIDTGVRQRLSAHL) enclose the Orange domain. Disordered regions lie at residues 305–334 (QLPVKNSTSPPLSPISSISSHCEESRAASP) and 349–416 (STPP…DEPS). Residues 311–324 (STSPPLSPISSISS) are compositionally biased toward low complexity. Composition is skewed to polar residues over residues 355-378 (SAETSFNTSGSLNLSAGSHDSSGC) and 385-395 (LQQQQVSSTSG). Ser407, Ser408, and Ser411 each carry phosphoserine. A WRPW motif motif is present at residues 432–435 (WRPW).

As to quaternary structure, homodimer. Heterodimer with E(spl)mgamma-HLH and E(spl). Transcription repression requires formation of a complex with the corepressor protein Groucho. Interacts (via bHLH motif) with sisA. Interacts with da.

The protein localises to the nucleus. Its function is as follows. Transcriptional repressor of genes that require a bHLH protein for their transcription. In the larval brain, required to maintain the self-renewal and identity of type II neuroblasts by regulating the expression of the transcriptional repressor erm together with other self-renewal transcriptional repressors such as klu and E(spl)mgamma-HLH. As part of its role in neuroblasts development, has been shown to be a direct target of the Notch signaling pathway, however might work also independently of N/Notch. In the developing larval and pupal brain, required for mushroom body differentiation. Involved in sex determination and SXL transcription repression when in complex with the corepressor protein Groucho. This chain is Protein deadpan (dpn), found in Drosophila melanogaster (Fruit fly).